Here is a 177-residue protein sequence, read N- to C-terminus: RNA polymerase sigma-E factor (177 aa).

A Polymerase core binding motif is present at residues 34 to 47; that stretch reads DLLQTALARTYGRW. The H-T-H motif DNA-binding region spans 128–147; the sequence is TEETAAALGMSAGTVKSTLH.

It belongs to the sigma-70 factor family. ECF subfamily.

The protein localises to the cytoplasm. Functionally, sigma factors are initiation factors that promote the attachment of RNA polymerase to specific initiation sites and are then released. This sigma factor is required for normal cell wall integrity; it is recruited by RNA polymerase to transcribe genes with cell wall-related functions. It is also involved in the transcription of the dagA gene coding for an extracellular agar-degrading enzyme. This Streptomyces coelicolor (strain ATCC BAA-471 / A3(2) / M145) protein is RNA polymerase sigma-E factor (sigE).